Here is a 229-residue protein sequence, read N- to C-terminus: Geodin cluster transcription factor (229 aa).

Positions 12–39 form a DNA-binding region, zn(2)-C6 fungal-type; the sequence is CHACAASKVRCSKEKPTCSRCSKRGTTC. Disordered regions lie at residues 50–100 and 141–169; these read KQLN…PGTT and TANS…RPPT. 2 stretches are compositionally biased toward polar residues: residues 51–71 and 153–164; these read QLNN…SLAT and ITSSHNTSSNSP.

Its subcellular location is the nucleus. Its function is as follows. Transcription factor that regulates the expression of the gene cluster that mediates the biosynthesis of geodin, an intermediate in the biosynthesis of other natural products. This Aspergillus terreus (strain NIH 2624 / FGSC A1156) protein is Geodin cluster transcription factor.